The sequence spans 170 residues: Crossover junction endodeoxyribonuclease RuvC (170 aa).

Active-site residues include Asp-9, Glu-70, and Asp-145. Asp-9, Glu-70, and Asp-145 together coordinate Mg(2+).

Belongs to the RuvC family. As to quaternary structure, homodimer which binds Holliday junction (HJ) DNA. The HJ becomes 2-fold symmetrical on binding to RuvC with unstacked arms; it has a different conformation from HJ DNA in complex with RuvA. In the full resolvosome a probable DNA-RuvA(4)-RuvB(12)-RuvC(2) complex forms which resolves the HJ. Mg(2+) is required as a cofactor.

It is found in the cytoplasm. It carries out the reaction Endonucleolytic cleavage at a junction such as a reciprocal single-stranded crossover between two homologous DNA duplexes (Holliday junction).. In terms of biological role, the RuvA-RuvB-RuvC complex processes Holliday junction (HJ) DNA during genetic recombination and DNA repair. Endonuclease that resolves HJ intermediates. Cleaves cruciform DNA by making single-stranded nicks across the HJ at symmetrical positions within the homologous arms, yielding a 5'-phosphate and a 3'-hydroxyl group; requires a central core of homology in the junction. The consensus cleavage sequence is 5'-(A/T)TT(C/G)-3'. Cleavage occurs on the 3'-side of the TT dinucleotide at the point of strand exchange. HJ branch migration catalyzed by RuvA-RuvB allows RuvC to scan DNA until it finds its consensus sequence, where it cleaves and resolves the cruciform DNA. In Chlamydia trachomatis serovar L2 (strain ATCC VR-902B / DSM 19102 / 434/Bu), this protein is Crossover junction endodeoxyribonuclease RuvC.